Consider the following 1217-residue polypeptide: Myosin-5 (1217 aa).

Positions 1–11 are enriched in basic residues; it reads MAILKRGARNK. Residues 1-24 form a disordered region; the sequence is MAILKRGARNKTHQEPAKRGGNNI. A Myosin motor domain is found at 37-716; that stretch reads VGVSDLTLLT…TLFALENMRD (680 aa). 130-137 lines the ATP pocket; sequence GESGAGKT. At Ser-358 the chain carries Phosphoserine. The actin-binding stretch occupies residues 405-487; it reads SIGILDIYGF…PGIFAAMNDS (83 aa). 2 consecutive IQ domains span residues 720 to 740 and 741 to 766; these read HNMA…RIDA and AVKI…YGTS. In terms of domain architecture, TH1 spans 772 to 962; it reads KERRSMSLLG…TIFVRRGNPA (191 aa). Disordered stretches follow at residues 956-1102, 1145-1174, and 1197-1217; these read VRRG…NPSE, GAKA…AQTV, and NKMR…DDDW. Positions 965-974 are enriched in basic residues; that stretch reads KSKKKPRKKS. Residues 976–987 are compositionally biased toward polar residues; the sequence is GMSAPTTQSSKT. Over residues 994 to 1007 the composition is skewed to low complexity; that stretch reads SSNNQNTTVSQSLN. Over residues 1025 to 1038 the composition is skewed to pro residues; sequence PAPPPPGSKKPAPQ. Residues 1050–1071 show a composition bias toward low complexity; the sequence is PQAQMQTQTQIPASQSSATQSS. Residues 1072 to 1081 show a composition bias toward pro residues; it reads IPPPPPPPPS. Positions 1083 to 1145 constitute an SH3 domain; sequence TSEPQFEAAY…PTAYMVKHEG (63 aa). The segment covering 1162–1174 has biased composition (polar residues); that stretch reads IQNQSQPASAQTV. Over residues 1203-1217 the composition is skewed to acidic residues; it reads SDEEAAASSDNDDDW.

The protein belongs to the TRAFAC class myosin-kinesin ATPase superfamily. Myosin family. In terms of processing, phosphorylation of the TEDS site (Ser-358) is required for the polarization of the actin cytoskeleton. Phosphorylation probably activates the myosin-I ATPase activity.

It is found in the cytoplasm. Its subcellular location is the cytoskeleton. The protein resides in the actin patch. Functionally, type-I myosin implicated in the organization of the actin cytoskeleton. Required for proper actin cytoskeleton polarization. At the cell cortex, assembles in patch-like structures together with proteins from the actin-polymerizing machinery and promotes actin assembly. Functions as actin nucleation-promoting factor (NPF) for the Arp2/3 complex. The chain is Myosin-5 (MYO5) from Candida glabrata (strain ATCC 2001 / BCRC 20586 / JCM 3761 / NBRC 0622 / NRRL Y-65 / CBS 138) (Yeast).